A 152-amino-acid chain; its full sequence is MIALIQRVKRADVRVGDRTTGEIGAGLLALVCAERGDTDAAADKLLAKMLGYRVFSDAAGKMNLPVSNIDGEGRAGGLLLVSQFTLAADTNSGLRPSFTPAAPPDEGARLFDYFVAAARARHPVVETGEFGADMQVSLVNDGPVTFWLQVRP.

Residues 142 to 143 (GP) carry the Gly-cisPro motif, important for rejection of L-amino acids motif.

Belongs to the DTD family. In terms of assembly, homodimer.

It is found in the cytoplasm. It carries out the reaction glycyl-tRNA(Ala) + H2O = tRNA(Ala) + glycine + H(+). The catalysed reaction is a D-aminoacyl-tRNA + H2O = a tRNA + a D-alpha-amino acid + H(+). An aminoacyl-tRNA editing enzyme that deacylates mischarged D-aminoacyl-tRNAs. Also deacylates mischarged glycyl-tRNA(Ala), protecting cells against glycine mischarging by AlaRS. Acts via tRNA-based rather than protein-based catalysis; rejects L-amino acids rather than detecting D-amino acids in the active site. By recycling D-aminoacyl-tRNA to D-amino acids and free tRNA molecules, this enzyme counteracts the toxicity associated with the formation of D-aminoacyl-tRNA entities in vivo and helps enforce protein L-homochirality. The protein is D-aminoacyl-tRNA deacylase of Burkholderia lata (strain ATCC 17760 / DSM 23089 / LMG 22485 / NCIMB 9086 / R18194 / 383).